A 455-amino-acid polypeptide reads, in one-letter code: DNA repair protein RadA (455 aa).

The C4-type zinc finger occupies cysteine 12–cysteine 29. Glycine 95–serine 102 lines the ATP pocket. Residues lysine 252–glycine 256 carry the RadA KNRFG motif motif. Positions aspartate 351–glutamine 455 are lon-protease-like.

This sequence belongs to the RecA family. RadA subfamily.

DNA-dependent ATPase involved in processing of recombination intermediates, plays a role in repairing DNA breaks. Stimulates the branch migration of RecA-mediated strand transfer reactions, allowing the 3' invading strand to extend heteroduplex DNA faster. Binds ssDNA in the presence of ADP but not other nucleotides, has ATPase activity that is stimulated by ssDNA and various branched DNA structures, but inhibited by SSB. Does not have RecA's homology-searching function. The polypeptide is DNA repair protein RadA (Chlamydia muridarum (strain MoPn / Nigg)).